The following is a 400-amino-acid chain: CinA-like protein (400 aa).

It belongs to the CinA family.

This chain is CinA-like protein, found in Escherichia coli (strain SMS-3-5 / SECEC).